We begin with the raw amino-acid sequence, 197 residues long: Peptide deformylase (197 aa).

Fe cation is bound by residues Cys-106 and His-148. Residue Glu-149 is part of the active site. Residue His-152 coordinates Fe cation.

Belongs to the polypeptide deformylase family. Fe(2+) is required as a cofactor.

It catalyses the reaction N-terminal N-formyl-L-methionyl-[peptide] + H2O = N-terminal L-methionyl-[peptide] + formate. Removes the formyl group from the N-terminal Met of newly synthesized proteins. Requires at least a dipeptide for an efficient rate of reaction. N-terminal L-methionine is a prerequisite for activity but the enzyme has broad specificity at other positions. The polypeptide is Peptide deformylase (Mycobacteroides abscessus (strain ATCC 19977 / DSM 44196 / CCUG 20993 / CIP 104536 / JCM 13569 / NCTC 13031 / TMC 1543 / L948) (Mycobacterium abscessus)).